The primary structure comprises 311 residues: Putative dihydroorotate dehydrogenase A (fumarate) (311 aa).

Substrate-binding positions include Lys-45, 69-73 (NSMGL), and Asn-128. Residue 45 to 46 (KT) participates in FMN binding. Position 128 (Asn-128) interacts with FMN. Cys-131 functions as the Nucleophile in the catalytic mechanism. Residues Lys-165 and Val-193 each contribute to the FMN site. 194–195 (NS) is a substrate binding site. FMN contacts are provided by residues Gly-220, 248-249 (GG), and 270-271 (GT).

It belongs to the dihydroorotate dehydrogenase family. Type 1 subfamily. Homodimer. It depends on FMN as a cofactor.

It localises to the cytoplasm. It catalyses the reaction (S)-dihydroorotate + fumarate = orotate + succinate. It functions in the pathway pyrimidine metabolism; UMP biosynthesis via de novo pathway. Catalyzes the conversion of dihydroorotate to orotate with fumarate as the electron acceptor. This Streptococcus uberis (strain ATCC BAA-854 / 0140J) protein is Putative dihydroorotate dehydrogenase A (fumarate) (pyrD).